Here is a 394-residue protein sequence, read N- to C-terminus: Cell division protein FtsZ (394 aa).

GTP contacts are provided by residues 21-25 (GGGNN), 108-110 (GTG), Glu-139, Arg-143, and Asp-187. The segment at 317-394 (DKPSSQGRKA…EERRSRRTRR (78 aa)) is disordered. 2 stretches are compositionally biased toward low complexity: residues 328-346 (STGF…SGAS) and 353-364 (SAHTSHSQSSES). Positions 365 to 388 (VNERSHTTKDDDIPSFIRNREERR) are enriched in basic and acidic residues.

This sequence belongs to the FtsZ family. Homodimer. Polymerizes to form a dynamic ring structure in a strictly GTP-dependent manner. Interacts directly with several other division proteins.

Its subcellular location is the cytoplasm. In terms of biological role, essential cell division protein that forms a contractile ring structure (Z ring) at the future cell division site. The regulation of the ring assembly controls the timing and the location of cell division. One of the functions of the FtsZ ring is to recruit other cell division proteins to the septum to produce a new cell wall between the dividing cells. Binds GTP and shows GTPase activity. In Staphylococcus epidermidis (strain ATCC 12228 / FDA PCI 1200), this protein is Cell division protein FtsZ.